A 156-amino-acid chain; its full sequence is Aspartate carbamoyltransferase regulatory chain (156 aa).

The Zn(2+) site is built by Cys-109, Cys-114, Cys-138, and Cys-141.

Belongs to the PyrI family. In terms of assembly, contains catalytic and regulatory chains. Zn(2+) is required as a cofactor.

Functionally, involved in allosteric regulation of aspartate carbamoyltransferase. The sequence is that of Aspartate carbamoyltransferase regulatory chain from Baumannia cicadellinicola subsp. Homalodisca coagulata.